A 285-amino-acid chain; its full sequence is ATP phosphoribosyltransferase (285 aa).

The protein belongs to the ATP phosphoribosyltransferase family. Long subfamily. Mg(2+) serves as cofactor.

It is found in the cytoplasm. The enzyme catalyses 1-(5-phospho-beta-D-ribosyl)-ATP + diphosphate = 5-phospho-alpha-D-ribose 1-diphosphate + ATP. It functions in the pathway amino-acid biosynthesis; L-histidine biosynthesis; L-histidine from 5-phospho-alpha-D-ribose 1-diphosphate: step 1/9. Feedback inhibited by histidine. In terms of biological role, catalyzes the condensation of ATP and 5-phosphoribose 1-diphosphate to form N'-(5'-phosphoribosyl)-ATP (PR-ATP). Has a crucial role in the pathway because the rate of histidine biosynthesis seems to be controlled primarily by regulation of HisG enzymatic activity. The chain is ATP phosphoribosyltransferase from Streptomyces coelicolor (strain ATCC BAA-471 / A3(2) / M145).